The chain runs to 212 residues: Uridine kinase (212 aa).

13 to 20 (GASASGKS) serves as a coordination point for ATP.

This sequence belongs to the uridine kinase family.

It localises to the cytoplasm. It catalyses the reaction uridine + ATP = UMP + ADP + H(+). The catalysed reaction is cytidine + ATP = CMP + ADP + H(+). It functions in the pathway pyrimidine metabolism; CTP biosynthesis via salvage pathway; CTP from cytidine: step 1/3. The protein operates within pyrimidine metabolism; UMP biosynthesis via salvage pathway; UMP from uridine: step 1/1. The chain is Uridine kinase from Psychromonas ingrahamii (strain DSM 17664 / CCUG 51855 / 37).